Here is a 393-residue protein sequence, read N- to C-terminus: Sugar efflux transporter B (393 aa).

A run of 12 helical transmembrane segments spans residues 13 to 33 (FDLTSTAFLIVAFLTGIAGAL), 52 to 72 (MVGFFFTGSAVIGIIVSQFLA), 84 to 101 (LIVFCCVLGMLACVLFAW), 105 to 124 (YFILLFIGVFLSSFGSTANP), 152 to 172 (VSLAWVIGPPLAYALAMGFSF), 174 to 194 (VMYLSAAVAFIVCGVMVWFFL), 219 to 239 (LLLFVICTLMWGTNSLYIINM), 253 to 273 (LAGVMMGTAAGLEIPTMLIAG), 283 to 303 (LLMCIAVVAGLCFYVGMLLAH), 308 to 328 (LLGLQLLNAIYIGILGGIGML), 344 to 364 (LYTNTIRVGWIIAGSLAGIAA), and 366 to 386 (IWNYHAVFWFALVMIVATMFC).

It belongs to the major facilitator superfamily. Set transporter family.

It localises to the cell inner membrane. Involved in the efflux of sugars. The physiological role may be the detoxification of non-metabolizable sugar analogs. Can transport lactose and glucose. This chain is Sugar efflux transporter B (setB), found in Salmonella typhimurium (strain LT2 / SGSC1412 / ATCC 700720).